We begin with the raw amino-acid sequence, 229 residues long: 5'-methylthioadenosine/S-adenosylhomocysteine nucleosidase (229 aa).

Residue Glu-12 is the Proton acceptor of the active site. Residues Gly-78, Met-152, and 173 to 174 (ME) contribute to the substrate site. Catalysis depends on Asp-197, which acts as the Proton donor.

It belongs to the PNP/UDP phosphorylase family. MtnN subfamily.

It carries out the reaction S-adenosyl-L-homocysteine + H2O = S-(5-deoxy-D-ribos-5-yl)-L-homocysteine + adenine. It catalyses the reaction S-methyl-5'-thioadenosine + H2O = 5-(methylsulfanyl)-D-ribose + adenine. The enzyme catalyses 5'-deoxyadenosine + H2O = 5-deoxy-D-ribose + adenine. Its pathway is amino-acid biosynthesis; L-methionine biosynthesis via salvage pathway; S-methyl-5-thio-alpha-D-ribose 1-phosphate from S-methyl-5'-thioadenosine (hydrolase route): step 1/2. Its function is as follows. Catalyzes the irreversible cleavage of the glycosidic bond in both 5'-methylthioadenosine (MTA) and S-adenosylhomocysteine (SAH/AdoHcy) to adenine and the corresponding thioribose, 5'-methylthioribose and S-ribosylhomocysteine, respectively. Also cleaves 5'-deoxyadenosine, a toxic by-product of radical S-adenosylmethionine (SAM) enzymes, into 5-deoxyribose and adenine. The sequence is that of 5'-methylthioadenosine/S-adenosylhomocysteine nucleosidase from Oceanobacillus iheyensis (strain DSM 14371 / CIP 107618 / JCM 11309 / KCTC 3954 / HTE831).